A 318-amino-acid polypeptide reads, in one-letter code: ATP phosphoribosyltransferase regulatory subunit (318 aa).

It belongs to the class-II aminoacyl-tRNA synthetase family. HisZ subfamily. Heteromultimer composed of HisG and HisZ subunits.

The protein localises to the cytoplasm. It functions in the pathway amino-acid biosynthesis; L-histidine biosynthesis; L-histidine from 5-phospho-alpha-D-ribose 1-diphosphate: step 1/9. Functionally, required for the first step of histidine biosynthesis. May allow the feedback regulation of ATP phosphoribosyltransferase activity by histidine. In Lactococcus lactis subsp. cremoris (strain SK11), this protein is ATP phosphoribosyltransferase regulatory subunit.